The sequence spans 438 residues: Indole diterpene prenyltransferase paxD (438 aa).

80-81 (FM) is a binding site for L-tryptophan. Residues Arg-102, Lys-190, Arg-264, Lys-266, Tyr-268, Tyr-349, and Tyr-418 each coordinate substrate.

It belongs to the tryptophan dimethylallyltransferase family.

Its pathway is secondary metabolite biosynthesis. Indole diterpene prenyltransferase; part of the gene cluster that mediates the biosynthesis of paxilline, a mycotoxin that acts as an inhibitor of mammalian maxi-K channels. PaxG, the geranylgeranyl diphosphate (GGPP) synthase is proposed to catalyze the first step in paxilline biosynthesis. Condensation of indole-3-glycerol phosphate with GGPP by paxC then forms 3-geranylgeranylindole (3-GGI), followed by epoxidation and cyclization of this intermediate (by paxM and paxB) to form paspaline. Paspaline is subsequently converted to 13-desoxypaxilline by paxP, the latter being then converted to paxilline by paxQ. Finally paxilline can be mono- and di-prenylated by paxD. The sequence is that of Indole diterpene prenyltransferase paxD from Penicillium paxilli.